We begin with the raw amino-acid sequence, 339 residues long: NADH-quinone oxidoreductase subunit H (339 aa).

Helical transmembrane passes span I9–C29, P50–F70, I82–I102, V115–G135, M161–I181, M187–L207, M235–T255, I275–I295, and G311–V331.

It belongs to the complex I subunit 1 family. As to quaternary structure, NDH-1 is composed of 14 different subunits. Subunits NuoA, H, J, K, L, M, N constitute the membrane sector of the complex.

It localises to the cell inner membrane. It catalyses the reaction a quinone + NADH + 5 H(+)(in) = a quinol + NAD(+) + 4 H(+)(out). Its function is as follows. NDH-1 shuttles electrons from NADH, via FMN and iron-sulfur (Fe-S) centers, to quinones in the respiratory chain. The immediate electron acceptor for the enzyme in this species is believed to be ubiquinone. Couples the redox reaction to proton translocation (for every two electrons transferred, four hydrogen ions are translocated across the cytoplasmic membrane), and thus conserves the redox energy in a proton gradient. This subunit may bind ubiquinone. The sequence is that of NADH-quinone oxidoreductase subunit H from Rickettsia felis (strain ATCC VR-1525 / URRWXCal2) (Rickettsia azadi).